The chain runs to 361 residues: MLVSDFHFDLPDELIARYPTEERTASRLLHLNGETGHFEDKQFFDLLDQINEGDLLIFNNTRVIPARLYGRKASGGKLEVLVERVLDEHRCLAHVRASKAPKEGAELVLGEDKLGEGNGFKAIMTARHDALFELHFNEEQPVFDLLQQAGHMPLPPYIDRPDEDADQERYQTVYSKVLGAVAAPTAGLHFDNPTLEKLKAKGVNIAFVTLHVGAGTFQPVRVDNILDHKMHAEYAEVSQAVVDQILATKATGKRVIAVGTTSVRSIESAAQAAEKEGKLIAPFFSDTSIFLYPGKTFRVVDALVTNFHLPESTLIMLVSAFAGYRNTMKAYQHAVEAKYRFFSYGDAMFINKNPNALNDLP.

This sequence belongs to the QueA family. In terms of assembly, monomer.

Its subcellular location is the cytoplasm. The catalysed reaction is 7-aminomethyl-7-carbaguanosine(34) in tRNA + S-adenosyl-L-methionine = epoxyqueuosine(34) in tRNA + adenine + L-methionine + 2 H(+). Its pathway is tRNA modification; tRNA-queuosine biosynthesis. In terms of biological role, transfers and isomerizes the ribose moiety from AdoMet to the 7-aminomethyl group of 7-deazaguanine (preQ1-tRNA) to give epoxyqueuosine (oQ-tRNA). This chain is S-adenosylmethionine:tRNA ribosyltransferase-isomerase, found in Actinobacillus pleuropneumoniae serotype 3 (strain JL03).